A 240-amino-acid polypeptide reads, in one-letter code: 3-deoxy-D-manno-octulosonic acid kinase (240 aa).

The active site involves D170.

The protein belongs to the protein kinase superfamily. KdkA/RfaP family.

It is found in the cell inner membrane. It carries out the reaction an alpha-Kdo-(2-&gt;6)-lipid IVA + ATP = a 4-O-phospho-alpha-Kdo-(2-&gt;6)-lipid IVA + ADP + H(+). Its pathway is bacterial outer membrane biogenesis; LPS core biosynthesis. In terms of biological role, catalyzes the ATP-dependent phosphorylation of the 3-deoxy-D-manno-octulosonic acid (Kdo) residue in Kdo-lipid IV(A) at the 4-OH position. The protein is 3-deoxy-D-manno-octulosonic acid kinase of Actinobacillus succinogenes (strain ATCC 55618 / DSM 22257 / CCUG 43843 / 130Z).